The sequence spans 206 residues: Adenylyl-sulfate kinase (206 aa).

36 to 43 (GLSGSGKS) contacts ATP. Ser110 acts as the Phosphoserine intermediate in catalysis.

This sequence belongs to the APS kinase family.

It catalyses the reaction adenosine 5'-phosphosulfate + ATP = 3'-phosphoadenylyl sulfate + ADP + H(+). It functions in the pathway sulfur metabolism; hydrogen sulfide biosynthesis; sulfite from sulfate: step 2/3. Catalyzes the synthesis of activated sulfate. In Buchnera aphidicola subsp. Acyrthosiphon pisum (strain APS) (Acyrthosiphon pisum symbiotic bacterium), this protein is Adenylyl-sulfate kinase (cysC).